The following is a 345-amino-acid chain: NADPH dehydrogenase (345 aa).

Residue 23–26 (SPMC) coordinates FMN. Tyr-28 provides a ligand contact to substrate. FMN is bound by residues Ala-60 and Gln-102. Residue 164 to 167 (HGAH) coordinates substrate. FMN-binding positions include Arg-215 and 307 to 308 (GR).

The protein belongs to the NADH:flavin oxidoreductase/NADH oxidase family. NamA subfamily. Homotetramer. Requires FMN as cofactor.

The catalysed reaction is A + NADPH + H(+) = AH2 + NADP(+). Its function is as follows. Catalyzes the reduction of the double bond of an array of alpha,beta-unsaturated aldehydes and ketones. It also reduces the nitro group of nitroester and nitroaromatic compounds. It could have a role in detoxification processes. In Bacillus thuringiensis (strain Al Hakam), this protein is NADPH dehydrogenase.